The following is a 206-amino-acid chain: FMN-dependent NADH:quinone oxidoreductase (206 aa).

Residues S10, 16–18 (SSS), 93–96 (MYNF), and 137–140 (TRGG) contribute to the FMN site.

This sequence belongs to the azoreductase type 1 family. Homodimer. It depends on FMN as a cofactor.

It carries out the reaction 2 a quinone + NADH + H(+) = 2 a 1,4-benzosemiquinone + NAD(+). It catalyses the reaction N,N-dimethyl-1,4-phenylenediamine + anthranilate + 2 NAD(+) = 2-(4-dimethylaminophenyl)diazenylbenzoate + 2 NADH + 2 H(+). Quinone reductase that provides resistance to thiol-specific stress caused by electrophilic quinones. Its function is as follows. Also exhibits azoreductase activity. Catalyzes the reductive cleavage of the azo bond in aromatic azo compounds to the corresponding amines. This Psychromonas ingrahamii (strain DSM 17664 / CCUG 51855 / 37) protein is FMN-dependent NADH:quinone oxidoreductase.